Reading from the N-terminus, the 472-residue chain is Argininosuccinate lyase (472 aa).

This sequence belongs to the lyase 1 family. Argininosuccinate lyase subfamily.

Its subcellular location is the cytoplasm. It catalyses the reaction 2-(N(omega)-L-arginino)succinate = fumarate + L-arginine. It participates in amino-acid biosynthesis; L-arginine biosynthesis; L-arginine from L-ornithine and carbamoyl phosphate: step 3/3. The sequence is that of Argininosuccinate lyase from Rhodococcus opacus (strain B4).